The following is a 391-amino-acid chain: Response regulator aspartate phosphatase I (391 aa).

6 TPR repeats span residues 62–95, 150–183, 184–217, 224–257, 275–311, and 338–371; these read LEFRHEIMLSYMKSKEIEDLNNAYETIKEIEKQG, SYVYYYMKQTYFSMNYANRALKIFREYEEYAVQT, VRCQFIVAGNLIDSLEYERALEQFLKSLEISKES, AMSHMNIGICYDELKEYKKASQHLILALEIFEKS, KQQNYNVALIYFRKGRFIADKSDDKEYSAKFKILEGL, and ENFSIEVADYFHEQGNLMLSNEYYRMSIEARRKI.

This sequence belongs to the Rap family.

The protein localises to the cytoplasm. With respect to regulation, inhibited by PhrI. Functionally, activates ICEBs1 gene expression, excision and transfer by inactivating the ICEBs1 repressor protein ImmR. RapI-mediated induction likely results from an increase in the specific activity of the protease ImmA, which mediates proteolysis of ImmR. In addition, is involved in regulation of sporulation. Acts as a phosphatase that specifically dephosphorylates the sporulation initiation phosphotransferase Spo0F and inhibits its activity. The chain is Response regulator aspartate phosphatase I (rapI) from Bacillus subtilis (strain 168).